A 262-amino-acid chain; its full sequence is Proline-rich protein 23C (262 aa).

Disordered stretches follow at residues 1–52 (MGSR…AGTP) and 225–262 (VPSS…LFQE). Positions 226–242 (PSSPLQPLPPSPSPGPH) are enriched in pro residues. The segment covering 243–252 (ARPELPERPP) has biased composition (basic and acidic residues). A compositionally biased stretch (basic residues) spans 253-262 (CKVRRRLFQE).

This sequence belongs to the PRR23 family.

The polypeptide is Proline-rich protein 23C (PRR23C) (Homo sapiens (Human)).